A 700-amino-acid chain; its full sequence is Acyl-coenzyme A oxidase 2 (700 aa).

The protein belongs to the acyl-CoA oxidase family. As to quaternary structure, heteropentamer composed of five different subunits. Requires FAD as cofactor.

The protein localises to the peroxisome. It carries out the reaction a 2,3-saturated acyl-CoA + O2 = a (2E)-enoyl-CoA + H2O2. Its pathway is lipid metabolism; peroxisomal fatty acid beta-oxidation. Functionally, oxidizes strain chain acyl-CoAs with a chain length of 10 to 14 carbons. Also active toward the 2S isomers of acyl-CoA-esters containing a 2-methyl group. This chain is Acyl-coenzyme A oxidase 2 (POX2), found in Yarrowia lipolytica (strain CLIB 122 / E 150) (Yeast).